The sequence spans 212 residues: Probable nicotinate-nucleotide adenylyltransferase (212 aa).

Belongs to the NadD family.

The enzyme catalyses nicotinate beta-D-ribonucleotide + ATP + H(+) = deamido-NAD(+) + diphosphate. Its pathway is cofactor biosynthesis; NAD(+) biosynthesis; deamido-NAD(+) from nicotinate D-ribonucleotide: step 1/1. Catalyzes the reversible adenylation of nicotinate mononucleotide (NaMN) to nicotinic acid adenine dinucleotide (NaAD). This Shewanella sp. (strain ANA-3) protein is Probable nicotinate-nucleotide adenylyltransferase.